A 568-amino-acid polypeptide reads, in one-letter code: Light-independent protochlorophyllide reductase subunit B (568 aa).

Aspartate 36 is a binding site for [4Fe-4S] cluster. Aspartate 293 functions as the Proton donor in the catalytic mechanism. Residue 437–438 participates in substrate binding; that stretch reads GM. The segment at 476–517 is disordered; it reads ANGHPEAGVSVGAAEPSAAPSRSVVTEESNRATTPSSSTVHP. The segment covering 498 to 515 has biased composition (polar residues); it reads SVVTEESNRATTPSSSTV.

This sequence belongs to the ChlB/BchB/BchZ family. Protochlorophyllide reductase is composed of three subunits; BchL, BchN and BchB. Forms a heterotetramer of two BchB and two BchN subunits. [4Fe-4S] cluster is required as a cofactor.

The catalysed reaction is chlorophyllide a + oxidized 2[4Fe-4S]-[ferredoxin] + 2 ADP + 2 phosphate = protochlorophyllide a + reduced 2[4Fe-4S]-[ferredoxin] + 2 ATP + 2 H2O. Its pathway is porphyrin-containing compound metabolism; bacteriochlorophyll biosynthesis (light-independent). In terms of biological role, component of the dark-operative protochlorophyllide reductase (DPOR) that uses Mg-ATP and reduced ferredoxin to reduce ring D of protochlorophyllide (Pchlide) to form chlorophyllide a (Chlide). This reaction is light-independent. The NB-protein (BchN-BchB) is the catalytic component of the complex. This Roseiflexus sp. (strain RS-1) protein is Light-independent protochlorophyllide reductase subunit B.